An 882-amino-acid polypeptide reads, in one-letter code: MAKIRVHELAKELGIASKEMVEVLVELGLDVKNHMSTIEDSQASWVKKRLSKSDEDSKKQPAQPVTRDEAVKKHSGEPATQTTQKKPDNPRHVSGPRPQEGSKPSGSTGRREFSENREQSRKGEERHSANPRPGTQMKSPRNNAPRPTTRPENRSAGATGRTDNRAPGAAGRTDNRAPGAVGRTDNRGAGSASRPDNRVTRPAAGRPDNKGSRPSDAKRPPQRTVPGNTPRPVSSPERTTEKKPGEASRTLPGGAKTAGDKKAFRKNTPAFGQYQSKDYSRPGRKSKHKRKKENIEFQTPENIKIEGSIMVRDLAEKLNKNPAEIMKKLMELGIMATINQNIDFETAEIVSSLYDVKVERELSEEEKILEELVDIDDDAELIARPPVVTIMGHVDHGKTSLLDRIRQANVVSGEAGGITQHIGAYQVTIKNNKITFIDTPGHEAFTAMRARGANLTDIVILVVAADDGVMPQTVEAINHIRAAKVPFLVAINKIDKPQADPERIKQQLTEYNIVPEEWGGDTIFVPVSAKSGEGIENLLEMILLVAEMNEIRANPDRAAYGLVVEGELDKGRGAVATVLVLNGTLNIGDYIICGTNWCRVRAMIDDRGKRVDKALPSMPVEIMGWSGVPEAGGKVQVCDEKVAKEIIGLRLSEKKIEEQKQSSRVSLDEFFQQMKDAEVKELTLIIKGDVQGSVEALRQSLLRLATNEVKVNVIHSAVGAITETDVMLASASNAIIIGFNVRPDSKARKYAEDEKIDVRMYRVIYEAIDDVKKAMSGLLDPEYKEKFLGRAEVRALFKVPHVGVIAGSYVIDGKIQRNASVRVLRDGVIVYEGQLSSLKRFKDDAKEVVENYECGIGIKDFNDVKEGDIIEAYTLEEIPREL.

The disordered stretch occupies residues 38 to 294 (IEDSQASWVK…KSKHKRKKEN (257 aa)). 3 stretches are compositionally biased toward basic and acidic residues: residues 66–76 (TRDEAVKKHSG), 109–128 (GRREFSENREQSRKGEERHS), and 207–219 (PDNKGSRPSDAKR). The span at 282-292 (PGRKSKHKRKK) shows a compositional bias: basic residues. In terms of domain architecture, tr-type G spans 383–556 (ARPPVVTIMG…EMNEIRANPD (174 aa)). A G1 region spans residues 392–399 (GHVDHGKT). A GTP-binding site is contributed by 392-399 (GHVDHGKT). Residues 417-421 (GITQH) form a G2 region. Residues 438–441 (DTPG) form a G3 region. Residues 438 to 442 (DTPGH) and 492 to 495 (NKID) each bind GTP. A G4 region spans residues 492–495 (NKID). Positions 528 to 530 (SAK) are G5.

This sequence belongs to the TRAFAC class translation factor GTPase superfamily. Classic translation factor GTPase family. IF-2 subfamily.

It is found in the cytoplasm. Functionally, one of the essential components for the initiation of protein synthesis. Protects formylmethionyl-tRNA from spontaneous hydrolysis and promotes its binding to the 30S ribosomal subunits. Also involved in the hydrolysis of GTP during the formation of the 70S ribosomal complex. This Syntrophomonas wolfei subsp. wolfei (strain DSM 2245B / Goettingen) protein is Translation initiation factor IF-2.